A 359-amino-acid chain; its full sequence is Photosystem II protein D1 1 (359 aa).

3 helical membrane-spanning segments follow: residues 29–46 (YVGW…AATT), 118–133 (HFLI…EWEL), and 142–156 (WICI…AASA). Histidine 118 provides a ligand contact to chlorophyll a. Position 126 (tyrosine 126) interacts with pheophytin a. 2 residues coordinate [CaMn4O5] cluster: aspartate 170 and glutamate 189. A helical membrane pass occupies residues 197–218 (FHMLGVAGVFGGSLFSAMHGSL). Position 198 (histidine 198) interacts with chlorophyll a. Residues histidine 215 and 264–265 (SF) contribute to the a quinone site. Histidine 215 provides a ligand contact to Fe cation. Histidine 272 provides a ligand contact to Fe cation. Residues 274-288 (FLAAWPVVGIWFTAL) traverse the membrane as a helical segment. [CaMn4O5] cluster is bound by residues histidine 332, glutamate 333, aspartate 342, and alanine 344. Positions 345–359 (AAESAPVALQAPAIG) are excised as a propeptide.

The protein belongs to the reaction center PufL/M/PsbA/D family. PSII is composed of 1 copy each of membrane proteins PsbA, PsbB, PsbC, PsbD, PsbE, PsbF, PsbH, PsbI, PsbJ, PsbK, PsbL, PsbM, PsbT, PsbX, PsbY, PsbZ, Psb30/Ycf12, peripheral proteins PsbO, CyanoQ (PsbQ), PsbU, PsbV and a large number of cofactors. It forms dimeric complexes. The cofactor is The D1/D2 heterodimer binds P680, chlorophylls that are the primary electron donor of PSII, and subsequent electron acceptors. It shares a non-heme iron and each subunit binds pheophytin, quinone, additional chlorophylls, carotenoids and lipids. D1 provides most of the ligands for the Mn4-Ca-O5 cluster of the oxygen-evolving complex (OEC). There is also a Cl(-1) ion associated with D1 and D2, which is required for oxygen evolution. The PSII complex binds additional chlorophylls, carotenoids and specific lipids.. Post-translationally, tyr-161 forms a radical intermediate that is referred to as redox-active TyrZ, YZ or Y-Z. In terms of processing, C-terminally processed by CtpA; processing is essential to allow assembly of the oxygen-evolving complex and thus photosynthetic growth.

It localises to the cellular thylakoid membrane. The enzyme catalyses 2 a plastoquinone + 4 hnu + 2 H2O = 2 a plastoquinol + O2. In terms of biological role, photosystem II (PSII) is a light-driven water:plastoquinone oxidoreductase that uses light energy to abstract electrons from H(2)O, generating O(2) and a proton gradient subsequently used for ATP formation. It consists of a core antenna complex that captures photons, and an electron transfer chain that converts photonic excitation into a charge separation. The D1/D2 (PsbA/PsbD) reaction center heterodimer binds P680, the primary electron donor of PSII as well as several subsequent electron acceptors. This Synechococcus sp. (strain RCC307) protein is Photosystem II protein D1 1.